The sequence spans 565 residues: Oxygen-dependent choline dehydrogenase (565 aa).

FAD is bound at residue 7–36 (DYIICGAGSAGNVLATRLTEDPGVTVLLLE). His474 serves as the catalytic Proton acceptor.

This sequence belongs to the GMC oxidoreductase family. The cofactor is FAD.

The enzyme catalyses choline + A = betaine aldehyde + AH2. It catalyses the reaction betaine aldehyde + NAD(+) + H2O = glycine betaine + NADH + 2 H(+). The protein operates within amine and polyamine biosynthesis; betaine biosynthesis via choline pathway; betaine aldehyde from choline (cytochrome c reductase route): step 1/1. In terms of biological role, involved in the biosynthesis of the osmoprotectant glycine betaine. Catalyzes the oxidation of choline to betaine aldehyde and betaine aldehyde to glycine betaine at the same rate. The polypeptide is Oxygen-dependent choline dehydrogenase (Burkholderia pseudomallei (strain 1710b)).